The sequence spans 532 residues: Pre-rRNA-processing protein pro-1 (532 aa).

2 WD repeats span residues 136-175 (AHYQNITKLALSDDDSMVFTASKDGAIHGYLVTELVSADR) and 287-326 (GHSDEITRLTINTDGTLLASGDASGKYCIWEISSHQCLKV). A disordered region spans residues 435 to 464 (TLGDDEDDAPEVGNQRRQNKKNNKKNRKLQ). Residues 445-526 (EVGNQRRQNK…INRQMYEFVA (82 aa)) are a coiled coil. Positions 451-464 (RQNKKNNKKNRKLQ) are enriched in basic residues.

It belongs to the WD repeat IPI3/WDR18 family. As to quaternary structure, component of the PELP1 complex, composed of at least PELP1, TEX10 and WDR18. The complex interacts with pre-60S ribosome particles.

It is found in the nucleus. Its subcellular location is the nucleolus. The protein resides in the nucleoplasm. Its function is as follows. Component of the PELP1 complex involved in the nucleolar steps of 28S rRNA maturation and the subsequent nucleoplasmic transit of the pre-60S ribosomal subunit. Required for processing ITS2 sequences from rRNA intermediates during 26S rRNA maturation. Required in the soma to promote normal proliferation and prevent germline tumor formation. The polypeptide is Pre-rRNA-processing protein pro-1 (pro-1) (Caenorhabditis briggsae).